Here is a 304-residue protein sequence, read N- to C-terminus: Ribonuclease BN (304 aa).

7 residues coordinate Zn(2+): H63, H65, D67, H68, H140, D211, and H269. D67 functions as the Proton acceptor in the catalytic mechanism.

It belongs to the RNase Z family. RNase BN subfamily. In terms of assembly, homodimer. The cofactor is Zn(2+).

Functionally, zinc phosphodiesterase, which has both exoribonuclease and endoribonuclease activities. The polypeptide is Ribonuclease BN (Cronobacter sakazakii (strain ATCC BAA-894) (Enterobacter sakazakii)).